Here is a 274-residue protein sequence, read N- to C-terminus: Large ribosomal subunit protein uL2 (274 aa).

Residues 223–265 (VVMNPVDHPHGGGEGRTSGGRHPVSPWGMPTKGFKTRKNKRTD) form a disordered region. The segment covering 256-265 (FKTRKNKRTD) has biased composition (basic residues).

The protein belongs to the universal ribosomal protein uL2 family. In terms of assembly, part of the 50S ribosomal subunit. Forms a bridge to the 30S subunit in the 70S ribosome.

Its function is as follows. One of the primary rRNA binding proteins. Required for association of the 30S and 50S subunits to form the 70S ribosome, for tRNA binding and peptide bond formation. It has been suggested to have peptidyltransferase activity; this is somewhat controversial. Makes several contacts with the 16S rRNA in the 70S ribosome. The protein is Large ribosomal subunit protein uL2 of Vibrio parahaemolyticus serotype O3:K6 (strain RIMD 2210633).